We begin with the raw amino-acid sequence, 309 residues long: Tagatose-6-phosphate kinase (309 aa).

The protein belongs to the carbohydrate kinase PfkB family. LacC subfamily.

It catalyses the reaction D-tagatofuranose 6-phosphate + ATP = D-tagatofuranose 1,6-bisphosphate + ADP + H(+). It functions in the pathway carbohydrate metabolism; D-tagatose 6-phosphate degradation; D-glyceraldehyde 3-phosphate and glycerone phosphate from D-tagatose 6-phosphate: step 1/2. This chain is Tagatose-6-phosphate kinase, found in Streptococcus pneumoniae (strain P1031).